We begin with the raw amino-acid sequence, 87 residues long: Large ribosomal subunit protein bL27 (87 aa).

The segment at 1 to 21 (MAHKKAGGSSRNGRDSESKRL) is disordered.

Belongs to the bacterial ribosomal protein bL27 family.

The polypeptide is Large ribosomal subunit protein bL27 (Burkholderia ambifaria (strain MC40-6)).